Reading from the N-terminus, the 1400-residue chain is S phase cyclin A-associated protein in the endoplasmic reticulum (1400 aa).

Disordered regions lie at residues 36–61 (ESKD…GTHK), 226–277 (VKAH…IRSR), 517–550 (PARP…HEEK), and 701–723 (RIEQ…RARD). The segment covering 231 to 243 (TGSTASSEITPAQ) has biased composition (polar residues). The segment covering 539 to 550 (TIAESKKKHEEK) has biased composition (basic and acidic residues). The C2H2-type zinc finger occupies 792–816 (KQCSLCNVLISSEVYLFSHVKGRKH). Residue Ser832 is modified to Phosphoserine.

In terms of assembly, interacts with CCNA2/CDK2 complex, but not with CCNA2/CDC2, CCNB1/CDC2 or CCNE1/CDK2 complexes, at multiple phases of the cell cycle, including S and G2/M. Post-translationally, phosphorylated in vitro by the CCNA2/CDK2 complex. Widely expressed with high expression in testis. Isoform 1 is detected in various tissues, including retina, fetal and adult brain. Isoform 2 is expressed in the retina at high levels, and in the brain at very low levels.

The protein resides in the endoplasmic reticulum. It is found in the nucleus. In terms of biological role, CCNA2/CDK2 regulatory protein that transiently maintains CCNA2 in the cytoplasm. In Homo sapiens (Human), this protein is S phase cyclin A-associated protein in the endoplasmic reticulum.